The sequence spans 476 residues: MNFYSPPTLMELARQCLLRDEYLAISALKDLPNMMFPVMFKEAFIDGHTKILTAMIPVWPFPYLSVGTMLKNLNLDTLKAVLEEIDILISKPVFSSRCKLREITLSHDLVVVWAGSHEVEGLPEFMEQEKPVENSPGYGTKNKLKVTTELQFMEGHLDECSTYLLQWAYQREDSIHLHCRKLKIYGLTKAAVIEMFKIVHAEYIEDLELSCLCLEYLDFLNPYLKQMSNLLSLTLDEIIYTLNIDDYRNLNEEKVITVISHLPTFHHLQELYVHGVIFIECLRCLKKPLEVLSFTDCDLSQSDLDYLPYCLNIFELRSLHLTDVRLSNLLLEPLGFLLERVRHTLKSLQLMSCEMGETHFNALLPALSQCYQLTVVNFYGNELSLLFLKKLLHHTAKLSQLADELYPAPQECYDNRDVVLSHRLENFCSELLDILRAIREPKKVTFGTIKCSKCGGSYVYDLETQCCFFEKNPPWA.

The stretch at 97 to 121 (RCKLREITLSHDLVVVWAGSHEVEG) is one LRR 1; degenerate repeat. Residues 176–200 (HLHCRKLKIYGLTKAAVIEMFKIVH) form an LRR 2; degenerate repeat. The stretch at 201-226 (AEYIEDLELSCLCLEYLDFLNPYLKQ) is one LRR 3; degenerate repeat. One copy of the LRR 4; degenerate repeat lies at 227–264 (MSNLLSLTLDEIIYTLNIDDYRNLNEEKVITVISHLPT). LRR repeat units lie at residues 265-285 (FHHL…LRCL), 286-317 (KKPL…FELR), 342-369 (RHTL…ALSQ), and 370-394 (CYQL…LLHH).

This sequence belongs to the PRAME family. As to expression, expressed in ovary, specifically in oocytes. Detected in follicles with two layers of granulosa cells, and are present in early as well as large antral follicles.

This Mus musculus (Mouse) protein is Oogenesin-2.